A 669-amino-acid chain; its full sequence is DNA ligase (669 aa).

NAD(+) is bound by residues 34–38 (DAEYD), 83–84 (SL), and E114. K116 (N6-AMP-lysine intermediate) is an active-site residue. The NAD(+) site is built by R137, E171, K287, and K311. Positions 405, 408, 423, and 428 each coordinate Zn(2+). The region spanning 591–669 (NVESYFAGKT…EERFLQELNK (79 aa)) is the BRCT domain.

Belongs to the NAD-dependent DNA ligase family. LigA subfamily. It depends on Mg(2+) as a cofactor. The cofactor is Mn(2+).

The catalysed reaction is NAD(+) + (deoxyribonucleotide)n-3'-hydroxyl + 5'-phospho-(deoxyribonucleotide)m = (deoxyribonucleotide)n+m + AMP + beta-nicotinamide D-nucleotide.. Functionally, DNA ligase that catalyzes the formation of phosphodiester linkages between 5'-phosphoryl and 3'-hydroxyl groups in double-stranded DNA using NAD as a coenzyme and as the energy source for the reaction. It is essential for DNA replication and repair of damaged DNA. The sequence is that of DNA ligase from Bacillus cereus (strain ATCC 10987 / NRS 248).